We begin with the raw amino-acid sequence, 349 residues long: tRNA N6-adenosine threonylcarbamoyltransferase (349 aa).

Residues histidine 117 and histidine 121 each contribute to the Fe cation site. Substrate is bound by residues 140–144, aspartate 173, glycine 186, and asparagine 284; that span reads LVSGG. Aspartate 312 serves as a coordination point for Fe cation.

Belongs to the KAE1 / TsaD family. Requires Fe(2+) as cofactor.

The protein resides in the cytoplasm. The enzyme catalyses L-threonylcarbamoyladenylate + adenosine(37) in tRNA = N(6)-L-threonylcarbamoyladenosine(37) in tRNA + AMP + H(+). In terms of biological role, required for the formation of a threonylcarbamoyl group on adenosine at position 37 (t(6)A37) in tRNAs that read codons beginning with adenine. Is involved in the transfer of the threonylcarbamoyl moiety of threonylcarbamoyl-AMP (TC-AMP) to the N6 group of A37, together with TsaE and TsaB. TsaD likely plays a direct catalytic role in this reaction. The protein is tRNA N6-adenosine threonylcarbamoyltransferase of Psychrobacter arcticus (strain DSM 17307 / VKM B-2377 / 273-4).